A 770-amino-acid polypeptide reads, in one-letter code: 3-isopropylmalate dehydratase (770 aa).

[4Fe-4S] cluster-binding residues include Cys-354, Cys-415, and Cys-418.

Belongs to the aconitase/IPM isomerase family. As to quaternary structure, monomer. [4Fe-4S] cluster serves as cofactor.

The catalysed reaction is (2R,3S)-3-isopropylmalate = (2S)-2-isopropylmalate. The protein operates within amino-acid biosynthesis; L-leucine biosynthesis; L-leucine from 3-methyl-2-oxobutanoate: step 2/4. Its function is as follows. Catalyzes the isomerization between 2-isopropylmalate and 3-isopropylmalate, via the formation of 2-isopropylmaleate. This chain is 3-isopropylmalate dehydratase (LEU1), found in Candida maltosa (Yeast).